A 435-amino-acid polypeptide reads, in one-letter code: AP-2 complex subunit mu (435 aa).

Serine 45 carries the post-translational modification Phosphoserine. The residue at position 156 (threonine 156) is a Phosphothreonine. The MHD domain occupies 170 to 434 (RNELFLDVLE…IGRSGIYETR (265 aa)). Positions 341, 345, and 354 each coordinate a 1,2-diacyl-sn-glycero-3-phospho-(1D-myo-inositol-3,4,5-trisphosphate).

It belongs to the adaptor complexes medium subunit family. In terms of assembly, adaptor protein complex 2 (AP-2) is a heterotetramer composed of two large adaptins (alpha-type subunit AP2A1 or AP2A2 and beta-type subunit AP2B1), a medium adaptin (mu-type subunit AP2M1) and a small adaptin (sigma-type subunit AP2S1). Interacts with ATP6V1H and MEGF10. Interacts with EGFR. Interacts with PIP5K1C; tyrosine phosphorylation of PIP5K1C weakens the interaction. Interacts with KIAA0319; required for clathrin-mediated endocytosis of KIAA0319. Interacts with DVL2 (via DEP domain). Interacts with KCNQ1; mediates estrogen-induced internalization via clathrin-coated vesicles. Together with AP2A1 or AP2A2 and AP2B1, it interacts with ADAM10; this interaction facilitates ADAM10 endocytosis from the plasma membrane during long-term potentiation in hippocampal neurons. Probably interacts with ACE2 (via endocytic sorting signal motif); the interaction is inhibited by ACE2 phosphorylation. Interacts with RALBP1; the interaction is direct. Interacts with TMEM106B (via N-terminus). In terms of processing, phosphorylation at Thr-156 increases the affinity of the AP-2 complex for cargo membrane proteins during the initial stages of endocytosis.

It localises to the cell membrane. The protein resides in the membrane. The protein localises to the coated pit. Component of the adaptor protein complex 2 (AP-2). Adaptor protein complexes function in protein transport via transport vesicles in different membrane traffic pathways. Adaptor protein complexes are vesicle coat components and appear to be involved in cargo selection and vesicle formation. AP-2 is involved in clathrin-dependent endocytosis in which cargo proteins are incorporated into vesicles surrounded by clathrin (clathrin-coated vesicles, CCVs) which are destined for fusion with the early endosome. The clathrin lattice serves as a mechanical scaffold but is itself unable to bind directly to membrane components. Clathrin-associated adaptor protein (AP) complexes which can bind directly to both the clathrin lattice and to the lipid and protein components of membranes are considered to be the major clathrin adaptors contributing the CCV formation. AP-2 also serves as a cargo receptor to selectively sort the membrane proteins involved in receptor-mediated endocytosis. AP-2 seems to play a role in the recycling of synaptic vesicle membranes from the presynaptic surface. AP-2 recognizes Y-X-X-[FILMV] (Y-X-X-Phi) and [ED]-X-X-X-L-[LI] endocytosis signal motifs within the cytosolic tails of transmembrane cargo molecules. AP-2 may also play a role in maintaining normal post-endocytic trafficking through the ARF6-regulated, non-clathrin pathway. During long-term potentiation in hippocampal neurons, AP-2 is responsible for the endocytosis of ADAM10. The AP-2 mu subunit binds to transmembrane cargo proteins; it recognizes the Y-X-X-Phi motifs. The surface region interacting with to the Y-X-X-Phi motif is inaccessible in cytosolic AP-2, but becomes accessible through a conformational change following phosphorylation of AP-2 mu subunit at Thr-156 in membrane-associated AP-2. The membrane-specific phosphorylation event appears to involve assembled clathrin which activates the AP-2 mu kinase AAK1. Plays a role in endocytosis of frizzled family members upon Wnt signaling. The polypeptide is AP-2 complex subunit mu (AP2M1) (Pongo abelii (Sumatran orangutan)).